The chain runs to 148 residues: MGARNKARKRAVDVLYEADLRGEDAVTLLSGRVGSPDLPPVNEYTVTLVEGVTANRQRIDELLVEHAEGWTLARMPAVDRAVLRLGLYELLWRSDDVPPAVAIDEAVELVKALSTDDSPRFVNGVLGRIAGIGDRLRSTLRGANPGAE.

This sequence belongs to the NusB family.

Its function is as follows. Involved in transcription antitermination. Required for transcription of ribosomal RNA (rRNA) genes. Binds specifically to the boxA antiterminator sequence of the ribosomal RNA (rrn) operons. The sequence is that of Transcription antitermination protein NusB from Saccharopolyspora erythraea (strain ATCC 11635 / DSM 40517 / JCM 4748 / NBRC 13426 / NCIMB 8594 / NRRL 2338).